Consider the following 258-residue polypeptide: Regulatory protein RecX (258 aa).

Belongs to the RecX family.

The protein resides in the cytoplasm. Modulates RecA activity. The sequence is that of Regulatory protein RecX from Streptococcus uberis (strain ATCC BAA-854 / 0140J).